Consider the following 572-residue polypeptide: Pentatricopeptide repeat-containing protein At5g15010, mitochondrial (572 aa).

The transit peptide at 1 to 57 (MRGIFLIRSRLSIFRAPAVKCLRFSNVLPSLSNNCIVRLYMEPPVACVLPLGLCSMF) directs the protein to the mitochondrion. PPR repeat units follow at residues 160–194 (SVRE…SPSL), 196–230 (NSQT…KLEM), 231–261 (GIDD…NKDK), 265–300 (DAKS…GVKH), 301–335 (DVVS…CIEP), 336–371 (DRKV…GIEP), 372–406 (NVVT…GLFP), 412–438 (HAFM…GCEP), 439–473 (TVET…TVGP), and 474–508 (DLSS…GMRP).

This sequence belongs to the PPR family. P subfamily.

It is found in the mitochondrion. This is Pentatricopeptide repeat-containing protein At5g15010, mitochondrial from Arabidopsis thaliana (Mouse-ear cress).